We begin with the raw amino-acid sequence, 359 residues long: MMTQPNLNIVPFVSVDHMMKLVLRVGVETFLKELAGYVEEDFRRWQNFDKTPRVASHSKEGVIELMPTSDGTLYGFKYVNGHPKNTRDGLQTVTAFGVLADVGSGYPMLLTEMTILTALRTAATSAVAAKHLAPKNARTMAIIGNSAQSEFQALAFKAILGVDKLRLYDLDPQATAKCIRNLQGAGFNIVACKSVEEAVEGADIITTVTADKANATILTDNMVGAGVHINAVGGDCPGKTELHGDILRRSDIFVEYPPQTRIEGEIQQLPEDYPVNELWEVITGRIAGRKDARQITLFDSVGFATEDFSALRYVRDKLKDTGLYEQLDLLADPDEPRDLYGMLLRHEKLLQSESTKPAA.

Residues Arg-53 and Lys-77 each contribute to the L-ornithine site. Residues Thr-92, Arg-120, 147–148 (AQ), Asp-169, Thr-209, 232–235 (VGGD), Lys-239, and Ser-300 contribute to the NAD(+) site. Arg-120 provides a ligand contact to L-ornithine. Asp-235 is an L-ornithine binding site. Asp-235 (proton donor/acceptor) is an active-site residue. L-ornithine is bound at residue Val-301.

The protein belongs to the ornithine cyclodeaminase/mu-crystallin family. NAD(+) serves as cofactor.

The catalysed reaction is L-ornithine = L-proline + NH4(+). It participates in amino-acid biosynthesis; L-proline biosynthesis; L-proline from L-ornithine: step 1/1. In terms of biological role, catalyzes the conversion of L-ornithine into L-proline with release of ammonia. The chain is Ornithine cyclodeaminase from Brucella melitensis biotype 1 (strain ATCC 23456 / CCUG 17765 / NCTC 10094 / 16M).